The following is a 359-amino-acid chain: MSNFKSKYHDELIANAAYIGTPGKGILAADESTGTIGKRLASINVENVETNRRALRELLFTAPNVLQYLSGVILFEETLYQSTAAGKPFVDVLNEAGVLPGIKVDKGTVELAGTDGETTTQGLDGLGARCAKYYEAGARFAKWRAVLKIGPNEPSLSILSIENAYGLARYAVICQENGLVPIVELEILVDGSHDIHKCAAITERVLAATYKALSDHHVLLEGTLLKPNMVTPGSDSPKVAPEVVAEHTVRALQRTVPAAVPAVVFLSGGQSEEEATVNLNAINQVKGKKPWTLSFSFGRALQQSTLKAWSGKEENVKNAQDALLTRAKANSEATLGTYKGNSQLGEGASESLHVKDYKY.

2 residues coordinate substrate: arginine 52 and lysine 142. The active-site Proton acceptor is glutamate 184. The active-site Schiff-base intermediate with dihydroxyacetone-P is the lysine 226.

This sequence belongs to the class I fructose-bisphosphate aldolase family.

The protein localises to the cytoplasm. The catalysed reaction is beta-D-fructose 1,6-bisphosphate = D-glyceraldehyde 3-phosphate + dihydroxyacetone phosphate. The protein operates within carbohydrate degradation; glycolysis; D-glyceraldehyde 3-phosphate and glycerone phosphate from D-glucose: step 4/4. This Cicer arietinum (Chickpea) protein is Fructose-bisphosphate aldolase, cytoplasmic isozyme (ALDC).